The chain runs to 137 residues: Methylglyoxal synthase (137 aa).

The 137-residue stretch at 1–137 folds into the MGS-like domain; the sequence is MNIALVAHDQ…EVRKSKSQRI (137 aa). Substrate contacts are provided by residues His8, Lys12, 34-37, and 54-55; these read TGTT and SG. Asp60 serves as the catalytic Proton donor/acceptor. His87 contributes to the substrate binding site.

Belongs to the methylglyoxal synthase family.

The enzyme catalyses dihydroxyacetone phosphate = methylglyoxal + phosphate. Its function is as follows. Catalyzes the formation of methylglyoxal from dihydroxyacetone phosphate. This is Methylglyoxal synthase from Clostridioides difficile (strain 630) (Peptoclostridium difficile).